The following is a 188-amino-acid chain: Xanthine phosphoribosyltransferase (188 aa).

The xanthine site is built by L20 and N27. 127–131 (AHGEA) provides a ligand contact to 5-phospho-alpha-D-ribose 1-diphosphate. K155 provides a ligand contact to xanthine.

It belongs to the purine/pyrimidine phosphoribosyltransferase family. Xpt subfamily. In terms of assembly, homodimer.

Its subcellular location is the cytoplasm. The catalysed reaction is XMP + diphosphate = xanthine + 5-phospho-alpha-D-ribose 1-diphosphate. It functions in the pathway purine metabolism; XMP biosynthesis via salvage pathway; XMP from xanthine: step 1/1. Its function is as follows. Converts the preformed base xanthine, a product of nucleic acid breakdown, to xanthosine 5'-monophosphate (XMP), so it can be reused for RNA or DNA synthesis. The protein is Xanthine phosphoribosyltransferase of Heliobacterium modesticaldum (strain ATCC 51547 / Ice1).